A 342-amino-acid polypeptide reads, in one-letter code: Autoinducer 2 import system permease protein LsrC (342 aa).

Residues 1 to 13 (MLKFIQNNREITA) lie on the Periplasmic side of the membrane. The helical transmembrane segment at 14–34 (LLAVVLLFVLPGFLDRQYLSV) threads the bilayer. The Cytoplasmic portion of the chain corresponds to 35-38 (QTLT). The helical transmembrane segment at 39 to 59 (MVYSSAQILILLAMGATLVML) threads the bilayer. Topologically, residues 60–69 (TRNIDVSVGS) are periplasmic. A helical membrane pass occupies residues 70-90 (ITGMCAVLLGMLLNAGYSLPV). The Cytoplasmic segment spans residues 91-92 (AC). The helical transmembrane segment at 93-113 (VTTLLLGLLAGFFNGVLVAWL) threads the bilayer. Lysine 114 is a topological domain (periplasmic). A helical membrane pass occupies residues 115 to 135 (IPAIVATLGTLGLYRGIMLLW). Residues 136 to 154 (TGGKWIEGLPAELKQLSAP) lie on the Cytoplasmic side of the membrane. The helical transmembrane segment at 155–175 (LLFGVSAIGWLTIILVAFMAW) threads the bilayer. Residues 176 to 212 (LLAKTAFGRSFYATGDNLQGARQLGVRTEAIRIVAFS) are Periplasmic-facing. A helical transmembrane segment spans residues 213-233 (LNGCMAALAGIVFASQIGFIP). At 234–251 (NQTGTGLEMKAIAACVLG) the chain is on the cytoplasmic side. The chain crosses the membrane as a helical span at residues 252–272 (GISLLGGSGAIIGAVLGAWFL). Residues 273-283 (TQIDSVLVLLR) lie on the Periplasmic side of the membrane. A helical membrane pass occupies residues 284–304 (IPAWWNDFIAGLVLLAVLVFD). Topologically, residues 305–342 (GRLRCALERNLRRQKYARFMTPPPSVKPASSGKKREAA) are cytoplasmic.

Belongs to the binding-protein-dependent transport system permease family. AraH/RbsC subfamily. The complex is composed of two ATP-binding proteins (LsrA), two transmembrane proteins (LsrC and LsrD) and a solute-binding protein (LsrB).

The protein localises to the cell inner membrane. Part of the ABC transporter complex LsrABCD involved in autoinducer 2 (AI-2) import. Probably responsible for the translocation of the substrate across the membrane. The sequence is that of Autoinducer 2 import system permease protein LsrC (lsrC) from Escherichia coli O9:H4 (strain HS).